The primary structure comprises 662 residues: Histidine decarboxylase (662 aa).

Substrate contacts are provided by tyrosine 81 and histidine 194. Lysine 305 bears the N6-(pyridoxal phosphate)lysine mark.

Belongs to the group II decarboxylase family. As to quaternary structure, homodimer. It depends on pyridoxal 5'-phosphate as a cofactor.

The catalysed reaction is L-histidine + H(+) = histamine + CO2. Its pathway is amine and polyamine biosynthesis; histamine biosynthesis; histamine from L-histidine: step 1/1. Catalyzes the biosynthesis of histamine from histidine. The chain is Histidine decarboxylase (HDC) from Homo sapiens (Human).